Consider the following 98-residue polypeptide: Complement inhibitor RaCI2 (98 aa).

An N-terminal signal peptide occupies residues 1-21 (MNAVTVLAFTAFALIVHDCYS). Cystine bridges form between cysteine 35–cysteine 59, cysteine 40–cysteine 61, and cysteine 55–cysteine 76.

It belongs to the RaCI family. As to expression, expressed in salivary glands.

It is found in the secreted. In terms of biological role, complement inhibitor. Prevents complement-mediated C5 activation by binding to C5. Binds C5 at a different binding site than the other tick complement inhibitors OmCI and CirpT1, and the drug eculizumab. This Rhipicephalus microplus (Cattle tick) protein is Complement inhibitor RaCI2.